Consider the following 870-residue polypeptide: Radial spoke head 10 homolog B2 (870 aa).

Positions methionine 1 to alanine 16 are enriched in basic and acidic residues. A disordered region spans residues methionine 1–glycine 44. The segment covering arginine 17–glutamate 39 has biased composition (polar residues). 10 MORN repeats span residues tyrosine 86–threonine 108, tyrosine 109–lysine 131, tyrosine 132–methionine 154, tyrosine 155–valine 177, tyrosine 179–threonine 201, tyrosine 204–isoleucine 226, tyrosine 227–glutamate 249, tyrosine 251–isoleucine 273, tyrosine 284–methionine 306, and tyrosine 307–valine 329. Residues asparagine 674–proline 704 are disordered. Positions histidine 683–serine 692 are enriched in basic and acidic residues. Over residues alanine 693–serine 703 the composition is skewed to low complexity. Residues lysine 784–arginine 811 adopt a coiled-coil conformation. Positions valine 840–lysine 870 are disordered.

As to quaternary structure, interacts with RSPH6A. Does not appear to be part of the axonemal radial spoke complexes 1 or 2.

Its subcellular location is the cytoplasm. It is found in the cytoskeleton. The protein localises to the cilium axoneme. The protein resides in the cell projection. It localises to the cilium. Its subcellular location is the flagellum. In terms of biological role, may function as part of the axonemal radial spoke complex 3 (RS3). Radial spoke complexes are important for ciliary motility. The polypeptide is Radial spoke head 10 homolog B2 (RSPH10B2) (Homo sapiens (Human)).